Here is a 237-residue protein sequence, read N- to C-terminus: Germination-specific N-acetylmuramoyl-L-alanine amidase (237 aa).

The signal sequence occupies residues 1-27 (MRKKLKWLSFLLGFIILLFLFKYQFSN). The 184-residue stretch at 43 to 226 (IYLDPGHGGP…VASSIYKGIL (184 aa)) folds into the MurNAc-LAA domain.

It belongs to the N-acetylmuramoyl-L-alanine amidase 3 family.

It is found in the secreted. The enzyme catalyses Hydrolyzes the link between N-acetylmuramoyl residues and L-amino acid residues in certain cell-wall glycopeptides.. Its function is as follows. Cleaves the peptide side chain from the N-acetylmuramic acid residues in peptidoglycan. This is a step in the formation of muramic delta-lactam residues in spore cortex. The polypeptide is Germination-specific N-acetylmuramoyl-L-alanine amidase (cwlD) (Bacillus subtilis (strain 168)).